A 501-amino-acid chain; its full sequence is MYVDMNREYLKDINTTEDVKIPEDPLERVIGHEDVMPMIKIAAKQRRHLLLVGPPGIGKSLLAQAISFHLPEPSEEITVVHNPERPERPFVEIKNRKEIEDEILEIERAEGELIDPQSAPDAVAERLGFKCIHCGEYSSAYNSICPRCGGDKFSHIKARRKHIGDLLGMFEMSSGSLSVPQKRVTTTRIIDGVEEVVIYERVGGEEIKVLDQRALEKRRQIVEEKPRNVIVPLDRKTFVQATGASETELLGDVRHDPYGGHPDLGSQPYERVVPGAIHEAHEGVLFIDEIVHIAGLQRFIFSAMQDKTFPIVGRNPQSAGSSVKVDEVPCDFIFVGACNIADLQYILPPLRSRIQGEGYELLLNTTMPDTDENRAKIAQFVAQEIELDGKIPHARAAAVELLIEEARRRARAVDDVDNALTLRLRDLGGVVRMAGDLAVMDGSPYIETRHMEVAIRKAVSVEDQIIRRYKSYEKALEKDLSSSQRMSQHGYSSENIDRSYM.

53 to 60 (GPPGIGKS) serves as a coordination point for ATP. Residues 481–494 (SSSQRMSQHGYSSE) show a composition bias toward polar residues. The disordered stretch occupies residues 481–501 (SSSQRMSQHGYSSENIDRSYM).

This sequence belongs to the peptidase S16 family.

This Methanothermobacter thermautotrophicus (strain ATCC 29096 / DSM 1053 / JCM 10044 / NBRC 100330 / Delta H) (Methanobacterium thermoautotrophicum) protein is Putative lon protease homolog.